A 696-amino-acid chain; its full sequence is Elongation factor G (696 aa).

One can recognise a tr-type G domain in the interval Glu8–Thr286. GTP contacts are provided by residues Ala17–Thr24, Asp81–His85, and Asn135–Asp138.

It belongs to the TRAFAC class translation factor GTPase superfamily. Classic translation factor GTPase family. EF-G/EF-2 subfamily.

The protein localises to the cytoplasm. In terms of biological role, catalyzes the GTP-dependent ribosomal translocation step during translation elongation. During this step, the ribosome changes from the pre-translocational (PRE) to the post-translocational (POST) state as the newly formed A-site-bound peptidyl-tRNA and P-site-bound deacylated tRNA move to the P and E sites, respectively. Catalyzes the coordinated movement of the two tRNA molecules, the mRNA and conformational changes in the ribosome. This is Elongation factor G from Sulfurimonas denitrificans (strain ATCC 33889 / DSM 1251) (Thiomicrospira denitrificans (strain ATCC 33889 / DSM 1251)).